The primary structure comprises 528 residues: Peptide chain release factor 3 (528 aa).

Residues 11–279 (SRRRTFAIIS…GLVDWAPSPQ (269 aa)) enclose the tr-type G domain. GTP is bound by residues 20–27 (SHPDAGKT), 88–92 (DTPGH), and 142–145 (NKLD).

The protein belongs to the TRAFAC class translation factor GTPase superfamily. Classic translation factor GTPase family. PrfC subfamily.

Its subcellular location is the cytoplasm. In terms of biological role, increases the formation of ribosomal termination complexes and stimulates activities of RF-1 and RF-2. It binds guanine nucleotides and has strong preference for UGA stop codons. It may interact directly with the ribosome. The stimulation of RF-1 and RF-2 is significantly reduced by GTP and GDP, but not by GMP. The sequence is that of Peptide chain release factor 3 from Pseudoalteromonas atlantica (strain T6c / ATCC BAA-1087).